A 1101-amino-acid chain; its full sequence is Type II inositol polyphosphate 5-phosphatase 15 (1101 aa).

The segment covering 31–40 has biased composition (low complexity); it reads RSAYSSSSSS. A disordered region spans residues 31-54; that stretch reads RSAYSSSSSSGDDESQPSVDDSNK. 6 WD repeats span residues 121-162, 180-219, 225-263, 403-432, 433-481, and 483-519; these read LRET…GSGR, FGSA…GIEE, AHRG…GKSL, DDSR…MRWD, GNGN…GGWV, and HSGP…PLDN. Catalytic regions lie at residues 749-765 and 828-843; these read DMVI…DDIT and KKRI…YRDN. Lysine 907 participates in a covalent cross-link: Glycyl lysine isopeptide (Lys-Gly) (interchain with G-Cter in ubiquitin).

Belongs to the inositol polyphosphate 5-phosphatase family. It depends on Mg(2+) as a cofactor. As to expression, predominantly expressed in interfascicular fibers and vascular bundles. Expressed in seedlings, stems, roots and flowers. Expressed at lower level in mature leaves.

It carries out the reaction a 1,2-diacyl-sn-glycero-3-phospho-(1D-myo-inositol-4,5-bisphosphate) + H2O = a 1,2-diacyl-sn-glycero-3-phospho-(1D-myo-inositol 4-phosphate) + phosphate. It catalyses the reaction a 1,2-diacyl-sn-glycero-3-phospho-(1D-myo-inositol-3,4,5-trisphosphate) + H2O = a 1,2-diacyl-sn-glycero-3-phospho-(1D-myo-inositol-3,4-bisphosphate) + phosphate. The enzyme catalyses 1D-myo-inositol 1,4,5-trisphosphate + H2O = 1D-myo-inositol 1,4-bisphosphate + phosphate. Has phosphatase activity toward PtdIns(4,5)P2, PtdIns(3,4,5)P3 and Ins(1,4,5)P3. Has a higher substrate affinity toward PtdIns(4,5)P2. Required for secondary wall synthesis and actin organization in fiber cells. This Arabidopsis thaliana (Mouse-ear cress) protein is Type II inositol polyphosphate 5-phosphatase 15.